Reading from the N-terminus, the 362-residue chain is Phosphatidylserine decarboxylase proenzyme (362 aa).

The chain crosses the membrane as a helical span at residues 26 to 44 (YLLTGVTILSFIFMFQYKY). Catalysis depends on charge relay system; for autoendoproteolytic cleavage activity residues Asp147, His206, and Ser316. Ser316 serves as the catalytic Schiff-base intermediate with substrate; via pyruvic acid; for decarboxylase activity. Residue Ser316 is modified to Pyruvic acid (Ser); by autocatalysis.

The protein belongs to the phosphatidylserine decarboxylase family. PSD-B subfamily. Eukaryotic type I sub-subfamily. In terms of assembly, heterodimer of a large membrane-associated beta subunit and a small pyruvoyl-containing alpha subunit. The cofactor is pyruvate. Post-translationally, is synthesized initially as an inactive proenzyme. Formation of the active enzyme involves a self-maturation process in which the active site pyruvoyl group is generated from an internal serine residue via an autocatalytic post-translational modification. Two non-identical subunits are generated from the proenzyme in this reaction, and the pyruvate is formed at the N-terminus of the alpha chain, which is derived from the carboxyl end of the proenzyme. The autoendoproteolytic cleavage occurs by a canonical serine protease mechanism, in which the side chain hydroxyl group of the serine supplies its oxygen atom to form the C-terminus of the beta chain, while the remainder of the serine residue undergoes an oxidative deamination to produce ammonia and the pyruvoyl prosthetic group on the alpha chain. During this reaction, the Ser that is part of the protease active site of the proenzyme becomes the pyruvoyl prosthetic group, which constitutes an essential element of the active site of the mature decarboxylase.

Its subcellular location is the endoplasmic reticulum membrane. It catalyses the reaction a 1,2-diacyl-sn-glycero-3-phospho-L-serine + H(+) = a 1,2-diacyl-sn-glycero-3-phosphoethanolamine + CO2. Its pathway is phospholipid metabolism; phosphatidylethanolamine biosynthesis; phosphatidylethanolamine from CDP-diacylglycerol: step 2/2. Functionally, catalyzes the formation of phosphatidylethanolamine (PtdEtn) from phosphatidylserine (PtdSer). Plays a central role in phospholipid metabolism and in the interorganelle trafficking of phosphatidylserine. This chain is Phosphatidylserine decarboxylase proenzyme, found in Plasmodium falciparum.